A 248-amino-acid polypeptide reads, in one-letter code: Probable transcriptional regulatory protein FTL_0929 (248 aa).

Belongs to the TACO1 family.

The protein resides in the cytoplasm. The sequence is that of Probable transcriptional regulatory protein FTL_0929 from Francisella tularensis subsp. holarctica (strain LVS).